The following is a 425-amino-acid chain: Orexin/Hypocretin receptor type 1 (425 aa).

Residues 1-46 lie on the Extracellular side of the membrane; that stretch reads MEPSATPGPQMGVPTGVGDPSLVPPDYEEEFLSYLWRDYLYPKQYE. The segment at 26 to 41 is required for response to orexin-A; that stretch reads DYEEEFLSYLWRDYLY. A helical membrane pass occupies residues 47 to 67; sequence WVLIAAYVAVFLVALVGNTLV. Residues 68 to 82 are Cytoplasmic-facing; the sequence is CLAVWRNHHMRTVTN. Residues 83–105 traverse the membrane as a helical segment; sequence YFIVNLSLADVLVTAICLPASLL. Residues 106–119 are Extracellular-facing; sequence VDITESWLFGHALC. A disulfide bridge links Cys-119 with Cys-202. A helical membrane pass occupies residues 120–140; that stretch reads KVIPYLQAVSVSVAVLTLSFI. Over 141 to 160 the chain is Cytoplasmic; that stretch reads ALDRWYAIYHPLLFKSTARR. The chain crosses the membrane as a helical span at residues 161–182; the sequence is ARGSILGIWAVSPAVMVPQAAV. At 183-213 the chain is on the extracellular side; it reads MECSSVLPELANRTRLFSVCDERWADDLYPK. Residues 214–235 traverse the membrane as a helical segment; that stretch reads IYHSCFFIVTYLAPLGLMAMAY. Topologically, residues 236 to 298 are cytoplasmic; sequence FQIFRKLWGR…QMRARRKTAK (63 aa). The helical transmembrane segment at 299–321 threads the bilayer; sequence MLMVVLLVFALCYLPISVLNVLK. Residues 322–336 are Extracellular-facing; that stretch reads RVFGMFRQTSDREAV. Residues 337–360 form a helical membrane-spanning segment; the sequence is YACFTFSHWLVYANSAANPIIYNF. Over 361–425 the chain is Cytoplasmic; sequence LSGKFREQFK…VLTSVTTVLP (65 aa).

This sequence belongs to the G-protein coupled receptor 1 family.

The protein resides in the cell membrane. Moderately selective excitatory receptor for orexin-A and, with a lower affinity, for orexin-B neuropeptide. Triggers an increase in cytoplasmic Ca(2+) levels in response to orexin-A binding. The chain is Orexin/Hypocretin receptor type 1 from Sus scrofa (Pig).